The primary structure comprises 719 residues: 1,4-alpha-glucan branching enzyme GlgB (719 aa).

The Nucleophile role is filled by Asp-400. Residue Glu-453 is the Proton donor of the active site.

It belongs to the glycosyl hydrolase 13 family. GlgB subfamily. In terms of assembly, monomer.

It catalyses the reaction Transfers a segment of a (1-&gt;4)-alpha-D-glucan chain to a primary hydroxy group in a similar glucan chain.. Its pathway is glycan biosynthesis; glycogen biosynthesis. Catalyzes the formation of the alpha-1,6-glucosidic linkages in glycogen by scission of a 1,4-alpha-linked oligosaccharide from growing alpha-1,4-glucan chains and the subsequent attachment of the oligosaccharide to the alpha-1,6 position. The sequence is that of 1,4-alpha-glucan branching enzyme GlgB from Chlamydia caviae (strain ATCC VR-813 / DSM 19441 / 03DC25 / GPIC) (Chlamydophila caviae).